A 334-amino-acid polypeptide reads, in one-letter code: Thiamine-binding periplasmic protein (334 aa).

The N-terminal stretch at 1-23 (MRLLSLLTFSLFAVIGLAPAAQA) is a signal peptide. Thiamine-binding positions include 64–65 (DG), 166–167 (AT), Trp-202, and 220–223 (YTTS).

This sequence belongs to the bacterial solute-binding protein 1 family. The complex is composed of two ATP-binding proteins (ThiQ), two transmembrane proteins (ThiP) and a solute-binding protein (ThiB).

The protein localises to the periplasm. Its function is as follows. Part of the ABC transporter complex ThiBPQ involved in thiamine import. In Brucella melitensis biotype 1 (strain ATCC 23456 / CCUG 17765 / NCTC 10094 / 16M), this protein is Thiamine-binding periplasmic protein (thiB).